Here is a 148-residue protein sequence, read N- to C-terminus: MKALLIVGLLLLSVAVQGKKFQRCELARTLKKLGLDGYRGVSLANWVCLARWESNYNTRATNYNRGDKSTDYGIFQINSRWWCNDGKTPKAVNACRIPCSALLKDDITQAVACAKRVVRDPQGIKAWVAWRNKCQNRDLRSYVQGCRV.

An N-terminal signal peptide occupies residues 1 to 18 (MKALLIVGLLLLSVAVQG). The C-type lysozyme domain occupies 19–148 (KKFQRCELAR…LRSYVQGCRV (130 aa)). Disulfide bonds link cysteine 24–cysteine 146, cysteine 48–cysteine 134, cysteine 83–cysteine 99, and cysteine 95–cysteine 113. Residues glutamate 53 and aspartate 71 contribute to the active site.

Belongs to the glycosyl hydrolase 22 family.

The enzyme catalyses Hydrolysis of (1-&gt;4)-beta-linkages between N-acetylmuramic acid and N-acetyl-D-glucosamine residues in a peptidoglycan and between N-acetyl-D-glucosamine residues in chitodextrins.. Lysozymes have primarily a bacteriolytic function; those in tissues and body fluids are associated with the monocyte-macrophage system and enhance the activity of immunoagents. In Bos taurus (Bovine), this protein is Lysozyme C, milk isozyme.